A 90-amino-acid polypeptide reads, in one-letter code: Putative protein p49 (90 aa).

This Escherichia coli (Bacteriophage APSE-1) protein is Putative protein p49 (49).